Reading from the N-terminus, the 233-residue chain is MRGVKRVFTWLAKLVLGLFFASILSVVLLRFIDPPMWSWRIERALFPPAPITEVRHQWRSLEQISPELQLAVIAAEDQKFAGHSGFDLDAISSAIEYNQKGKKVRGASTLSQQAAKNLFMWSSRSFIRKGIEAWFTLLMELIWDKARILEVYLNIVEFGPGIYGAEAASKHYFGKSAAKLTRYEASLLAAALPNPWRYKVSPPSSYVEQRSAWIRKQMRQLGEVTLKKVNEAQ.

A helical membrane pass occupies residues 7-27 (VFTWLAKLVLGLFFASILSVV).

Belongs to the glycosyltransferase 51 family.

The protein localises to the cell inner membrane. It carries out the reaction [GlcNAc-(1-&gt;4)-Mur2Ac(oyl-L-Ala-gamma-D-Glu-L-Lys-D-Ala-D-Ala)](n)-di-trans,octa-cis-undecaprenyl diphosphate + beta-D-GlcNAc-(1-&gt;4)-Mur2Ac(oyl-L-Ala-gamma-D-Glu-L-Lys-D-Ala-D-Ala)-di-trans,octa-cis-undecaprenyl diphosphate = [GlcNAc-(1-&gt;4)-Mur2Ac(oyl-L-Ala-gamma-D-Glu-L-Lys-D-Ala-D-Ala)](n+1)-di-trans,octa-cis-undecaprenyl diphosphate + di-trans,octa-cis-undecaprenyl diphosphate + H(+). Its pathway is cell wall biogenesis; peptidoglycan biosynthesis. In terms of biological role, peptidoglycan polymerase that catalyzes glycan chain elongation from lipid-linked precursors. This chain is Biosynthetic peptidoglycan transglycosylase, found in Shewanella oneidensis (strain ATCC 700550 / JCM 31522 / CIP 106686 / LMG 19005 / NCIMB 14063 / MR-1).